Consider the following 313-residue polypeptide: MVSYLDFEKPVAELQTRIAELRKATSDEMDLDREISDLEVKVQKLLRDTYAHLTPWQKTQVARHPERPHFHDYISALCEEFIPLAGDRLFGEDEAIIGGLARIDGQRVMIIGQEKGNDTASRLKHNFGMARPEGYRKAIRLMKLADRFGLPVITLVDTSGAFPGIDAEERGQAEAIARSTETCLSLGVPLISVIVGEGGSGGAIAIAAANRLLMFEHAVYSVISPEGCASILWRDAGKASDAATAMKLTATDLYGLGIVDRIVLEPVGGAHRDPKTAIDALKMALLQELAFLKPMDRDALRSMRRKKFLDIGG.

The CoA carboxyltransferase C-terminal domain occupies 30-291; the sequence is DLDREISDLE…KMALLQELAF (262 aa).

This sequence belongs to the AccA family. Acetyl-CoA carboxylase is a heterohexamer composed of biotin carboxyl carrier protein (AccB), biotin carboxylase (AccC) and two subunits each of ACCase subunit alpha (AccA) and ACCase subunit beta (AccD).

Its subcellular location is the cytoplasm. The catalysed reaction is N(6)-carboxybiotinyl-L-lysyl-[protein] + acetyl-CoA = N(6)-biotinyl-L-lysyl-[protein] + malonyl-CoA. Its pathway is lipid metabolism; malonyl-CoA biosynthesis; malonyl-CoA from acetyl-CoA: step 1/1. Its function is as follows. Component of the acetyl coenzyme A carboxylase (ACC) complex. First, biotin carboxylase catalyzes the carboxylation of biotin on its carrier protein (BCCP) and then the CO(2) group is transferred by the carboxyltransferase to acetyl-CoA to form malonyl-CoA. The sequence is that of Acetyl-coenzyme A carboxylase carboxyl transferase subunit alpha from Zymomonas mobilis subsp. mobilis (strain ATCC 31821 / ZM4 / CP4).